The chain runs to 192 residues: Peptidyl-tRNA hydrolase (192 aa).

H17 serves as a coordination point for tRNA. Catalysis depends on H22, which acts as the Proton acceptor. The tRNA site is built by F68, N70, and N116.

This sequence belongs to the PTH family. As to quaternary structure, monomer.

Its subcellular location is the cytoplasm. The enzyme catalyses an N-acyl-L-alpha-aminoacyl-tRNA + H2O = an N-acyl-L-amino acid + a tRNA + H(+). Hydrolyzes ribosome-free peptidyl-tRNAs (with 1 or more amino acids incorporated), which drop off the ribosome during protein synthesis, or as a result of ribosome stalling. Its function is as follows. Catalyzes the release of premature peptidyl moieties from peptidyl-tRNA molecules trapped in stalled 50S ribosomal subunits, and thus maintains levels of free tRNAs and 50S ribosomes. The sequence is that of Peptidyl-tRNA hydrolase from Xylella fastidiosa (strain 9a5c).